The following is a 68-amino-acid chain: Small ribosomal subunit protein bS21 (68 aa).

Residues 37-49 (EKPSEKRAREKAA) are compositionally biased toward basic and acidic residues. The interval 37–68 (EKPSEKRAREKAAAVRRARKMERKRMERDGIK) is disordered. Positions 50–59 (AVRRARKMER) are enriched in basic residues.

This sequence belongs to the bacterial ribosomal protein bS21 family.

The protein is Small ribosomal subunit protein bS21 of Erythrobacter litoralis (strain HTCC2594).